We begin with the raw amino-acid sequence, 1080 residues long: MREFLKDDYDVIVCGGGPVGLATAYRCAKAGKKVLCLEKSVFFNGGGSSGDVVRMLRTMYTEDYMADLAHETLGLWKELGDDAGEGDLVWMTGLLNFGDPNYGAGGPEGTLLGPIPNLERLGMQYKVLTAQEIMEEYPFRNIPSNHQGVFAPDNGVINLPLVLRSLYKLCLQYGCKMVSHAEVKLIKNLSTTMVEIEVEHTDVDQKNKQSFKVKSKKAAITSNSFCNHIIKPSFGWELDMTIWEMTSSYFVAKPGPNATVFKSMWFNFQNDTDNDPTKSNLYYGFPAVPWMTDNHCRIALDAALRQIKDPNDRHDGVETHDVNRTRDWVREHIPGVDDTPLFNVSALMANVYDNMFVLDFIPETNNNVVMFACGWAMKFIPLLGKILSQLLDEGKTQYPIDHFALNRGNGALIIKEGQTPKSVNSQVRAPRYTSMHCKPLTIAKSTVPTNQSSNPDGASSTAPTQSLRSLFASRLLQRSVGMEAKFHSIIAKNRSKRSTKASQKDLTVGIIGAGMAGLYAAMILQDLGLQYNILEANKERVGGRIYTYRFPQNQDKYQTVELGAMRFPKIEIMDRLLNLDKPWSLFSKLEKAGHKIPTIPYHLTVDNNLVYYNGKRIFANTLLNDDPLYFSDTHNGGPGTAVPDKYTYQPYGDLLDAVYKKFSDDLENDFESGFETLLKSDNYSTRAYLFEKGPYPQSVVNYLETMDTGTGLYDMAFSETIMDYFDFSAGDEWLCIDGGTDIIVNSMVKTLRPGCIEQGKVVTKVSRVVGKSGDVSNLKVDFLDGTEGRLFKHVISTGTLASLRRVDLSDLKLSHNKRTAIRSLHYDHSVKIALSFKSRWWEDSKFMNGKPMLGGKSSTDLPVRTIVYPSYGIGQPGVSGVLIVSYTWSLDASRIGSLVGDRPSEEVLIKLCMANLAEVHNVPVATLQQLFVDYKCWDWYNDDYSSGAFALYSPSQFSQLFPSLTKPSPDGRFHLAGEATSVHHGWVIGSLNSAYRSVDHILQVEGLDELRAKLRLNWGFIDEVEDPQDDQQYVDPHHNLSGPNAKKFRSNVSQVAIQPRFKAPRNFKPRNTAASIGGLK.

The interval 1–450 (MREFLKDDYD…TIAKSTVPTN (450 aa)) is putative sarcosine oxidase. FAD is bound at residue 10–40 (DVIVCGGGPVGLATAYRCAKAGKKVLCLEKS). The segment at 445-464 (STVPTNQSSNPDGASSTAPT) is disordered. The interval 450–1080 (NQSSNPDGAS…NTAASIGGLK (631 aa)) is putative L-amino-acid oxidase. A helical membrane pass occupies residues 508 to 528 (VGIIGAGMAGLYAAMILQDLG). FAD contacts are provided by residues E535, R544, and 563–564 (GA). Y886 is a substrate binding site. Residues E978 and 987–990 (VIGS) contribute to the FAD site.

This sequence in the N-terminal section; belongs to the MSOX/MTOX family. It in the C-terminal section; belongs to the flavin monoamine oxidase family. The cofactor is FAD.

Its subcellular location is the membrane. It carries out the reaction sarcosine + O2 + H2O = formaldehyde + glycine + H2O2. The catalysed reaction is L-pipecolate + O2 = L-1-piperideine-6-carboxylate + H2O2 + H(+). It catalyses the reaction an L-alpha-amino acid + O2 + H2O = a 2-oxocarboxylate + H2O2 + NH4(+). In terms of biological role, catalyzes an oxidative deamination of predominantly hydrophobic and aromatic L-amino acids. Metabolizes sarcosine, L-pipecolic acid and L-proline. This Dictyostelium discoideum (Social amoeba) protein is Putative bifunctional amine oxidase DDB_G0291301.